The sequence spans 161 residues: Peroxynitrite isomerase 2 (161 aa).

Positions 17–23 (GTWAGQG) match the GXWXGXG motif. Residue His-152 participates in heme b binding.

The protein belongs to the nitrobindin family. Homodimer. The cofactor is heme b.

The catalysed reaction is peroxynitrite = nitrate. It participates in nitrogen metabolism. In terms of biological role, heme-binding protein able to scavenge peroxynitrite and to protect free L-tyrosine against peroxynitrite-mediated nitration, by acting as a peroxynitrite isomerase that converts peroxynitrite to nitrate. Therefore, this protein likely plays a role in peroxynitrite sensing and in the detoxification of reactive nitrogen and oxygen species (RNS and ROS, respectively). Is able to bind nitric oxide (NO) in vitro, but may act as a sensor of peroxynitrite levels in vivo. This chain is Peroxynitrite isomerase 2, found in Mycobacterium marinum (strain ATCC BAA-535 / M).